Here is a 380-residue protein sequence, read N- to C-terminus: Guanine nucleotide-binding protein subunit beta (380 aa).

7 WD repeats span residues Gly-64–Asn-94, Leu-106–Asn-136, Gly-155–Asp-186, Gly-203–Asp-234, Gly-247–Asp-277, Asn-296–Asp-326, and Ser-342–Ala-372.

This sequence belongs to the WD repeat G protein beta family. As to quaternary structure, g proteins are composed of 3 units, alpha, beta and gamma. As to expression, present in the root, leaf and tassel.

Its function is as follows. Guanine nucleotide-binding proteins (G proteins) are involved as a modulator or transducer in various transmembrane signaling systems. The beta and gamma chains are required for the GTPase activity, for replacement of GDP by GTP, and for G protein-effector interaction. In Zea mays (Maize), this protein is Guanine nucleotide-binding protein subunit beta (GB1).